Reading from the N-terminus, the 238-residue chain is Cadherin-2 (238 aa).

Cadherin domains follow at residues 1 to 46 (TKPL…RPEF), 47 to 161 (LHQV…PPEF), and 162 to 238 (TAMT…RMFV). The Extracellular segment spans residues 1-238 (TKPLDRELIA…IDFETNRMFV (238 aa)). Residues aspartate 5, glutamate 7, aspartate 38, methionine 39, asparagine 40, aspartate 41, and asparagine 42 each contribute to the Ca(2+) site. Asparagine 52 carries N-linked (GlcNAc...) asparagine glycosylation. The Ca(2+) site is built by aspartate 72, aspartate 74, and asparagine 80. Asparagine 104 carries N-linked (GlcNAc...) asparagine glycosylation. Residue aspartate 132 participates in Ca(2+) binding. The N-linked (GlcNAc...) asparagine glycan is linked to asparagine 181.

As to quaternary structure, homodimer (via extracellular region). Can also form heterodimers with other cadherins (via extracellular region). Dimerization occurs in trans, i.e. with a cadherin chain from another cell. Interacts with CDCP1. Interacts with PCDH8; this complex may also include TAOK2. The interaction with PCDH8 may lead to internalization through TAOK2/p38 MAPK pathway. Identified in a complex containing FGFR4, NCAM1, CDH2, PLCG1, FRS2, SRC, SHC1, GAP43 and CTTN. May interact with OBSCN (via protein kinase domain 2). Post-translationally, cleaved by MMP24. Ectodomain cleavage leads to the generation of a soluble 90 kDa N-terminal soluble fragment and a 45 kDa membrane-bound C-terminal fragment 1 (CTF1), which is further cleaved by gamma-secretase into a 35 kDa. Cleavage in neural stem cells by MMP24 affects CDH2-mediated anchorage of neural stem cells to ependymocytes in the adult subependymal zone, leading to modulate neural stem cell quiescence. In terms of processing, may be phosphorylated by OBSCN.

The protein localises to the cell membrane. It is found in the sarcolemma. The protein resides in the cell junction. It localises to the cell surface. Its subcellular location is the desmosome. The protein localises to the adherens junction. Functionally, calcium-dependent cell adhesion protein; preferentially mediates homotypic cell-cell adhesion by dimerization with a CDH2 chain from another cell. Cadherins may thus contribute to the sorting of heterogeneous cell types. Acts as a regulator of neural stem cells quiescence by mediating anchorage of neural stem cells to ependymocytes in the adult subependymal zone: upon cleavage by MMP24, CDH2-mediated anchorage is affected, leading to modulate neural stem cell quiescence. Plays a role in cell-to-cell junction formation between pancreatic beta cells and neural crest stem (NCS) cells, promoting the formation of processes by NCS cells. Required for proper neurite branching. Required for pre- and postsynaptic organization. CDH2 may be involved in neuronal recognition mechanism. In hippocampal neurons, may regulate dendritic spine density. The sequence is that of Cadherin-2 (CDH2) from Cricetulus griseus (Chinese hamster).